Consider the following 260-residue polypeptide: Dehydrogenase/reductase SDR family member 11 (260 aa).

Residues 1–30 (MTRAGMERWRDRLALVTGASGGIGAAVARA) form the signal peptide. NADP(+) is bound by residues 18–23 (GASGGI), 43–44 (RT), Glu49, 70–71 (DL), and Asn97. Positions 151 and 166 each coordinate substrate. NADP(+) contacts are provided by residues Tyr166, Lys170, 201–204 (VETQ), and Lys208. Tyr166 functions as the Proton acceptor in the catalytic mechanism.

The protein belongs to the short-chain dehydrogenases/reductases (SDR) family. In terms of assembly, homotetramer.

It localises to the secreted. It carries out the reaction a 3beta-hydroxysteroid + NADP(+) = a 3-oxosteroid + NADPH + H(+). The enzyme catalyses 17beta-estradiol + NAD(+) = estrone + NADH + H(+). The catalysed reaction is 17beta-estradiol + NADP(+) = estrone + NADPH + H(+). It participates in steroid biosynthesis; estrogen biosynthesis. Inhibited by flavonoids including apigenin, luteolin, genistein, kaempferol and quercetin and also by carbenoxolone, zearalenone, glycyrrhetinic, curcumin and flufenamic acid. Functionally, catalyzes the conversion of the 17-keto group of estrone, 4- and 5-androstenes and 5-alpha-androstanes into their 17-beta-hydroxyl metabolites and the conversion of the 3-keto group of 3-, 3,17- and 3,20- diketosteroids into their 3-hydroxyl metabolites. Exhibits reductive 3-beta-hydroxysteroid dehydrogenase activity toward 5-beta-androstanes, 5-beta-pregnanes, 4-pregnenes and bile acids. May also reduce endogenous and exogenous alpha-dicarbonyl compounds and xenobiotic alicyclic ketones. The polypeptide is Dehydrogenase/reductase SDR family member 11 (Dhrs11) (Mus musculus (Mouse)).